An 84-amino-acid polypeptide reads, in one-letter code: Small ribosomal subunit protein bS18A (84 aa).

The protein belongs to the bacterial ribosomal protein bS18 family. Part of the 30S ribosomal subunit. Forms a tight heterodimer with protein bS6.

In terms of biological role, binds as a heterodimer with protein bS6 to the central domain of the 16S rRNA, where it helps stabilize the platform of the 30S subunit. The chain is Small ribosomal subunit protein bS18A (rpsR1) from Mycobacterium bovis (strain ATCC BAA-935 / AF2122/97).